The sequence spans 136 residues: S-protein homolog 17 (136 aa).

The first 22 residues, 1-22, serve as a signal peptide directing secretion; that stretch reads MKNLSIFMFVFSLCMFGHVSRA.

This sequence belongs to the plant self-incompatibility (S1) protein family.

The protein localises to the secreted. The polypeptide is S-protein homolog 17 (Arabidopsis thaliana (Mouse-ear cress)).